We begin with the raw amino-acid sequence, 339 residues long: Tetraacyldisaccharide 4'-kinase (339 aa).

62-69 (VAGGTGKT) is a binding site for ATP.

Belongs to the LpxK family.

It catalyses the reaction a lipid A disaccharide + ATP = a lipid IVA + ADP + H(+). The protein operates within glycolipid biosynthesis; lipid IV(A) biosynthesis; lipid IV(A) from (3R)-3-hydroxytetradecanoyl-[acyl-carrier-protein] and UDP-N-acetyl-alpha-D-glucosamine: step 6/6. Functionally, transfers the gamma-phosphate of ATP to the 4'-position of a tetraacyldisaccharide 1-phosphate intermediate (termed DS-1-P) to form tetraacyldisaccharide 1,4'-bis-phosphate (lipid IVA). The chain is Tetraacyldisaccharide 4'-kinase from Xylella fastidiosa (strain 9a5c).